Reading from the N-terminus, the 250-residue chain is Purine nucleoside phosphorylase BQ2027_MB2173C (250 aa).

Positions 77, 114, and 131 each coordinate Zn(2+).

The protein belongs to the purine nucleoside phosphorylase YfiH/LACC1 family. Homodimer. Cu(2+) is required as a cofactor. It depends on Zn(2+) as a cofactor.

The enzyme catalyses adenosine + phosphate = alpha-D-ribose 1-phosphate + adenine. It catalyses the reaction S-methyl-5'-thioadenosine + phosphate = 5-(methylsulfanyl)-alpha-D-ribose 1-phosphate + adenine. The catalysed reaction is inosine + phosphate = alpha-D-ribose 1-phosphate + hypoxanthine. It carries out the reaction adenosine + H2O + H(+) = inosine + NH4(+). Its function is as follows. Purine nucleoside enzyme that catalyzes the phosphorolysis of adenosine and inosine nucleosides, yielding D-ribose 1-phosphate and the respective free bases, adenine and hypoxanthine. Also catalyzes the phosphorolysis of S-methyl-5'-thioadenosine into adenine and S-methyl-5-thio-alpha-D-ribose 1-phosphate. Also has adenosine deaminase activity. This Mycobacterium bovis (strain ATCC BAA-935 / AF2122/97) protein is Purine nucleoside phosphorylase BQ2027_MB2173C.